Consider the following 282-residue polypeptide: Globin-related protein glb-13 (282 aa).

The disordered stretch occupies residues 1–46 (MGQENSKCPHQSLAEKRYKVERPKTKKVSSGSATERCLSTQSDEKN). The span at 13 to 23 (LAEKRYKVERP) shows a compositional bias: basic and acidic residues. Residues 28 to 41 (VSSGSATERCLSTQ) are compositionally biased toward polar residues. The 150-residue stretch at 100–249 (FLTRRERILL…IISFMRRGFD (150 aa)) folds into the Globin domain. Residues His-162 and His-194 each coordinate heme b.

The protein belongs to the globin family.

Involved in oxidative stress resistance. The chain is Globin-related protein glb-13 from Caenorhabditis elegans.